We begin with the raw amino-acid sequence, 512 residues long: GMP synthase [glutamine-hydrolyzing] (512 aa).

In terms of domain architecture, Glutamine amidotransferase type-1 spans 7–197 (TIIVLDFGSQ…VFGVCGCSEG (191 aa)). Cysteine 84 acts as the Nucleophile in catalysis. Catalysis depends on residues histidine 171 and glutamate 173. Positions 198–387 (WNMENFIEVE…LGIPDEIVWR (190 aa)) constitute a GMPS ATP-PPase domain. An ATP-binding site is contributed by 225–231 (SGGVDSS).

As to quaternary structure, homodimer.

It carries out the reaction XMP + L-glutamine + ATP + H2O = GMP + L-glutamate + AMP + diphosphate + 2 H(+). The protein operates within purine metabolism; GMP biosynthesis; GMP from XMP (L-Gln route): step 1/1. Catalyzes the synthesis of GMP from XMP. This chain is GMP synthase [glutamine-hydrolyzing], found in Bacillus mycoides (strain KBAB4) (Bacillus weihenstephanensis).